We begin with the raw amino-acid sequence, 74 residues long: Protein SOM1, mitochondrial (74 aa).

In terms of assembly, component of the mitochondrial inner membrane peptidase (IMP) complex which at least consists of IMP1, IMP2 and SOM1.

Its subcellular location is the mitochondrion inner membrane. Non-catalytic component of the mitochondrial inner membrane peptidase (IMP) complex. IMP catalyzes the removal of signal peptides required for the targeting of proteins from the mitochondrial matrix, across the inner membrane, into the inter-membrane space. SOM1 facilitates cleavage of a subset of IMP substrates. The chain is Protein SOM1, mitochondrial (SOM1) from Saccharomyces cerevisiae (strain ATCC 204508 / S288c) (Baker's yeast).